Reading from the N-terminus, the 879-residue chain is MTKEHKKMYKAGKYWAVATLVSASILMEVGVTTHADAVENNKYDGTANVNIDCQANVDGKIISTDDNATSGSTKQESSIANDNATSGSTKQESSIANDNATSGSTKQESSIANDNATSGSTKQESSVANDNATSGSTKQESSVANDNATSGSTKQESSVANDNATSGSTKQESSVANDTKTAVVDESKNTSNTENDNSQLKQTNNEQPSAATQANLKKLNHEAAKAVQNAKIDAGSLTDEQINELNKINFSKSAEKGAKLTFKDLEGIGNAIVKQDPQYAVPYFNAKEIKNMPASYTVDAQTGKMAHLDVWDSWPVQDPTGYVSNYKGYQLVIAMMGIPNTPNGDNHIYLLYNKYGDNDFSHWRNAGSIFGTNENNVYQEWSGSAIVNDNGTIQLFYTSNDTSDYKLNDQRLATATLNLDVDDNGVAIKSVDNYHILFEGDGFHYQTYDQFANGKDRKNDDYCLRDPHVVQSENGDRYLVFEANTGMEDYQSDDQIYNWANYGGDDAFNIKSFFKLLNNKNDRELASLANGAIGILKLNNDQTNPKVEEVYSPLVSTLMASDEVERVNVVKLGDKYYLFSATRVSRGSDRELNAKDITIVGDNVAMIGYVSDNLMGKYKPLNNSGVVLTASVPANWRTATYSYYAVPVEGHPDQVLITSYMSNKDFASGEGNYATLAPSFIVQINPDDTTTVLARATNQGDWVWDDSSRNDNMLGVLKEGAVNSAALPGEWGKPVDWSLINRSSGLGLKPHQPVNPSQPTTPATPVNPSQPTTPATPVNPSQPTTPATPVNPSATTTPATPVNPSATTTPAKPVNPSQPTTPAKPVQAGQATATNFVDQRLPQTGENNSQSQTMSFIGILLAMFGSLLGFLGIKKRRND.

An N-terminal signal peptide occupies residues 1–37 (MTKEHKKMYKAGKYWAVATLVSASILMEVGVTTHADA). Repeat copies occupy residues 66–81 (DNAT…SIAN), 82–97 (DNAT…SIAN), 98–113 (DNAT…SIAN), 114–129 (DNAT…SVAN), 130–145 (DNAT…SVAN), 146–161 (DNAT…SVAN), and 162–177 (DNAT…SVAN). The segment at 66 to 177 (DNATSGSTKQ…STKQESSVAN (112 aa)) is 7 X 16 AA tandem repeats of D-N-A-T-S-G-S-T-K-Q-E-S-S-[IV]-A-N. Polar residues-rich tracts occupy residues 66 to 180 (DNAT…NDTK) and 189 to 213 (NTSN…AATQ). The interval 66–213 (DNATSGSTKQ…NNEQPSAATQ (148 aa)) is disordered. The sucrose site is built by Trp-311, Asp-312, and Ser-382. The Nucleophile role is filled by Asp-312. Ca(2+) is bound at residue Asp-460. The sucrose site is built by Arg-465 and Asp-466. 4 residues coordinate Ca(2+): Gln-491, Leu-528, Asn-530, and Asp-562. Position 563 (Glu-563) interacts with sucrose. The active-site Proton donor/acceptor is the Glu-565. Residue Arg-583 coordinates sucrose. The segment at 743–830 (SSGLGLKPHQ…TPAKPVQAGQ (88 aa)) is disordered. The segment covering 754 to 821 (VNPSQPTTPA…KPVNPSQPTT (68 aa)) has biased composition (polar residues). Positions 841 to 845 (LPQTG) match the LPXTG sorting signal motif. At Thr-844 the chain carries Pentaglycyl murein peptidoglycan amidated threonine. Residues 845–879 (GENNSQSQTMSFIGILLAMFGSLLGFLGIKKRRND) constitute a propeptide, removed by sortase.

It belongs to the glycosyl hydrolase 68 family.

Its subcellular location is the secreted. The protein resides in the cell wall. The enzyme catalyses [6)-beta-D-fructofuranosyl-(2-&gt;](n) alpha-D-glucopyranoside + sucrose = [6)-beta-D-fructofuranosyl-(2-&gt;](n+1) alpha-D-glucopyranoside + D-glucose. With respect to regulation, ca(2+) may play an important structural role and promote stability of levansucrase. In terms of biological role, fructosyltransferase that catalyzes the polymerization of the fructose moiety of sucrose to produce levan polymer and the fructo-oligosaccharide (FOS) 1-kestose. Also displays sucrose hydrolase activity. This Fructilactobacillus sanfranciscensis (Lactobacillus sanfranciscensis) protein is Levansucrase.